The sequence spans 1487 residues: Golgin subfamily A member 3 (1487 aa).

Position 1 is an N-acetylmethionine (Met-1). The interval 1–118 is disordered; that stretch reads MDGASAKQDG…GTSAEGSVRK (118 aa). Residues Ser-18 and Ser-60 each carry the phosphoserine modification. The segment covering 62-74 has biased composition (polar residues); that stretch reads DRSSQVAICQNGQ. The interaction with GOPC stretch occupies residues 121–141; that stretch reads LQSLRLSLPMQETQLCSTASS. The tract at residues 172–257 is golgi-targeting domain; that stretch reads ERSSQPATKM…DYRTEDPSDS (86 aa). Disordered stretches follow at residues 221–321 and 365–394; these read PKVG…SSLS and AAQH…SMES. Low complexity-rich tracts occupy residues 269-288, 312-321, and 365-375; these read SSLK…SPSS, SDSSSHSSLS, and AAQHQDQNQEA. At Ser-270 the chain carries Phosphoserine. Residues 358–1454 are a coiled coil; sequence KDVLQAAAAQ…TITVHESLSS (1097 aa). Residues Ser-381, Ser-385, and Ser-461 each carry the phosphoserine modification. A compositionally biased stretch (basic and acidic residues) spans 785-796; the sequence is KEELDRGARRLE. The segment at 785–804 is disordered; it reads KEELDRGARRLEEDTEETSG. The residue at position 979 (Ser-979) is a Phosphoserine. The segment covering 1372–1382 has biased composition (basic and acidic residues); that stretch reads RGAAKKKEPKG. 2 disordered regions span residues 1372–1396 and 1458–1487; these read RGAA…IKIP and VEAA…GLGQ. At Ser-1387 the chain carries Phosphoserine. Over residues 1462–1474 the composition is skewed to basic and acidic residues; that stretch reads PAEHAHPRGDTKL. A Phosphoserine modification is found at Ser-1479.

In terms of assembly, homodimer. Interacts with GOLGA7. Interacts with GOPC. Post-translationally, cleaved by caspases in apoptotic cells. In terms of tissue distribution, highly expressed in testis. Transcripts can be found in spermatids during spermatogenesis. No expression in Leydig cells, spermatogonia or spermatocytes. Detected at low levels in all tissues.

The protein resides in the cytoplasm. It is found in the golgi apparatus. It localises to the golgi stack membrane. In terms of biological role, plays an important role in spermatogenesis and/or testis development. Probably identical with the serologically detectable male antigen (SDM). Probably involved in maintaining Golgi structure. The sequence is that of Golgin subfamily A member 3 (Golga3) from Mus musculus (Mouse).